The chain runs to 340 residues: COP9 signalosome complex subunit 5 (340 aa).

Residues 52–189 (VRISATALIK…IGAFRTYPAD (138 aa)) form the MPN domain. Zn(2+) is bound by residues His-135, His-137, and Asp-148. A JAMM motif motif is present at residues 135–148 (HSHPGYGCWLSGID).

Belongs to the peptidase M67A family. CSN5 subfamily. In terms of assembly, component of the COP9 signalosome (CSN) complex.

It is found in the cytoplasm. It localises to the nucleus. Its function is as follows. Catalytic Component of the COP9 signalosome (CSN) complex that acts as an regulator of the ubiquitin (Ubl) conjugation pathway by mediating the deneddylation of the cullin subunit of SCF-type E3 ubiquitin-protein ligase complexes. The polypeptide is COP9 signalosome complex subunit 5 (RRI1) (Gibberella zeae (strain ATCC MYA-4620 / CBS 123657 / FGSC 9075 / NRRL 31084 / PH-1) (Wheat head blight fungus)).